We begin with the raw amino-acid sequence, 510 residues long: NAD(P)H-quinone oxidoreductase subunit 2 A, chloroplastic (510 aa).

Transmembrane regions (helical) follow at residues 24–44 (LLLF…GLIL), 59–79 (WFYF…LFRW), 99–119 (IFQF…VEYI), 124–144 (MAIT…MFLC), 149–169 (LITI…LSGY), 183–203 (YLLM…WLYG), 229–249 (ISIA…PAPF), 295–315 (WHLL…LIAI), 323–343 (MLAY…IVGD), 347–367 (GYAS…GTFA), 395–415 (ALSS…AGFF), 418–438 (LHLF…IGLL), and 484–504 (MIVC…IIAI).

It belongs to the complex I subunit 2 family. As to quaternary structure, NDH is composed of at least 16 different subunits, 5 of which are encoded in the nucleus.

It localises to the plastid. The protein resides in the chloroplast thylakoid membrane. It carries out the reaction a plastoquinone + NADH + (n+1) H(+)(in) = a plastoquinol + NAD(+) + n H(+)(out). The enzyme catalyses a plastoquinone + NADPH + (n+1) H(+)(in) = a plastoquinol + NADP(+) + n H(+)(out). Functionally, NDH shuttles electrons from NAD(P)H:plastoquinone, via FMN and iron-sulfur (Fe-S) centers, to quinones in the photosynthetic chain and possibly in a chloroplast respiratory chain. The immediate electron acceptor for the enzyme in this species is believed to be plastoquinone. Couples the redox reaction to proton translocation, and thus conserves the redox energy in a proton gradient. The sequence is that of NAD(P)H-quinone oxidoreductase subunit 2 A, chloroplastic from Amborella trichopoda.